The chain runs to 63 residues: DNA-directed RNA polymerase 7 kDa subunit (63 aa).

It belongs to the poxviridae DNA-directed RNA polymerase 7 kDa subunit family. The DNA-dependent RNA polymerase used for intermediate and late genes expression consists of eight subunits 147 kDa, 133 kDa, 35 kDa, 30 kDa, 22 kDa, 19 kDa, 18 kDa and 7 kDa totalling more than 500 kDa in mass. The same holoenzyme, with the addition of the transcription-specificity factor RAP94, is used for early gene expression.

Its subcellular location is the virion. It carries out the reaction RNA(n) + a ribonucleoside 5'-triphosphate = RNA(n+1) + diphosphate. Functionally, part of the DNA-dependent RNA polymerase which catalyzes the transcription of viral DNA into RNA using the four ribonucleoside triphosphates as substrates. Responsible for the transcription of early, intermediate and late genes. DNA-dependent RNA polymerase associates with the early transcription factor (ETF) thereby allowing the early genes transcription. Late transcription, and probably also intermediate transcription, require newly synthesized RNA polymerase. This chain is DNA-directed RNA polymerase 7 kDa subunit (RPO7), found in Homo sapiens (Human).